We begin with the raw amino-acid sequence, 622 residues long: 1-deoxy-D-xylulose-5-phosphate synthase (622 aa).

Thiamine diphosphate is bound by residues His80 and 121-123; that span reads GHS. Asp152 serves as a coordination point for Mg(2+). Residues 153 to 154, Asn181, Tyr288, and Glu370 contribute to the thiamine diphosphate site; that span reads GA. Position 181 (Asn181) interacts with Mg(2+).

This sequence belongs to the transketolase family. DXPS subfamily. In terms of assembly, homodimer. Mg(2+) is required as a cofactor. Requires thiamine diphosphate as cofactor.

The catalysed reaction is D-glyceraldehyde 3-phosphate + pyruvate + H(+) = 1-deoxy-D-xylulose 5-phosphate + CO2. It participates in metabolic intermediate biosynthesis; 1-deoxy-D-xylulose 5-phosphate biosynthesis; 1-deoxy-D-xylulose 5-phosphate from D-glyceraldehyde 3-phosphate and pyruvate: step 1/1. Catalyzes the acyloin condensation reaction between C atoms 2 and 3 of pyruvate and glyceraldehyde 3-phosphate to yield 1-deoxy-D-xylulose-5-phosphate (DXP). This Shewanella oneidensis (strain ATCC 700550 / JCM 31522 / CIP 106686 / LMG 19005 / NCIMB 14063 / MR-1) protein is 1-deoxy-D-xylulose-5-phosphate synthase.